The primary structure comprises 201 residues: Recombination protein RecR (201 aa).

The C4-type zinc finger occupies 60–75; the sequence is CSECGNMDVSDPCTVC. The region spanning 83–178 is the Toprim domain; the sequence is AAICVVETVG…SITSLARGVP (96 aa).

Belongs to the RecR family.

Functionally, may play a role in DNA repair. It seems to be involved in an RecBC-independent recombinational process of DNA repair. It may act with RecF and RecO. The polypeptide is Recombination protein RecR (Maricaulis maris (strain MCS10) (Caulobacter maris)).